Consider the following 156-residue polypeptide: Arginine repressor (156 aa).

It belongs to the ArgR family.

It localises to the cytoplasm. It participates in amino-acid biosynthesis; L-arginine biosynthesis [regulation]. In terms of biological role, regulates arginine biosynthesis genes. The polypeptide is Arginine repressor (Vibrio cholerae serotype O1 (strain ATCC 39315 / El Tor Inaba N16961)).